Reading from the N-terminus, the 591-residue chain is Aspartate--tRNA(Asp/Asn) ligase (591 aa).

Residue Glu-176 participates in L-aspartate binding. Positions 200 to 203 (QLFK) are aspartate. Arg-222 contributes to the L-aspartate binding site. Residues 222–224 (RDE) and Gln-231 contribute to the ATP site. Residue His-450 coordinates L-aspartate. Glu-484 contributes to the ATP binding site. Arg-491 serves as a coordination point for L-aspartate. 536–539 (GLDR) lines the ATP pocket.

The protein belongs to the class-II aminoacyl-tRNA synthetase family. Type 1 subfamily. Homodimer.

The protein localises to the cytoplasm. It catalyses the reaction tRNA(Asx) + L-aspartate + ATP = L-aspartyl-tRNA(Asx) + AMP + diphosphate. Functionally, aspartyl-tRNA synthetase with relaxed tRNA specificity since it is able to aspartylate not only its cognate tRNA(Asp) but also tRNA(Asn). Reaction proceeds in two steps: L-aspartate is first activated by ATP to form Asp-AMP and then transferred to the acceptor end of tRNA(Asp/Asn). The sequence is that of Aspartate--tRNA(Asp/Asn) ligase from Bacillus thuringiensis (strain Al Hakam).